Reading from the N-terminus, the 544-residue chain is Chaperonin GroEL (544 aa).

ATP is bound by residues 30–33 (TLGP), Lys51, 87–91 (DGTTT), Gly415, 478–480 (DVA), and Asp494. The interval 524–544 (PEKEKKPATPAGAGGMGDMEY) is disordered. Residues 535–544 (GAGGMGDMEY) show a composition bias toward gly residues.

The protein belongs to the chaperonin (HSP60) family. Forms a cylinder of 14 subunits composed of two heptameric rings stacked back-to-back. Interacts with the co-chaperonin GroES.

It is found in the cytoplasm. It carries out the reaction ATP + H2O + a folded polypeptide = ADP + phosphate + an unfolded polypeptide.. In terms of biological role, together with its co-chaperonin GroES, plays an essential role in assisting protein folding. The GroEL-GroES system forms a nano-cage that allows encapsulation of the non-native substrate proteins and provides a physical environment optimized to promote and accelerate protein folding. The protein is Chaperonin GroEL of Methylacidiphilum infernorum (isolate V4) (Methylokorus infernorum (strain V4)).